The sequence spans 169 residues: Protein kinase-interacting protein PIKP1 (169 aa).

In terms of assembly, interacts with protein kinase PK1.

Functionally, plays a role in the stimulation of the viral kinase PK1 function in very late transcription and in expression of genes required for budded virus production. The sequence is that of Protein kinase-interacting protein PIKP1 (AC24) from Lepidoptera (butterflies and moths).